The following is a 487-amino-acid chain: Cytochrome P450 2C16 (487 aa).

A heme-binding site is contributed by Cys432.

Belongs to the cytochrome P450 family. Heme serves as cofactor. Expressed constitutively in liver, lung, testes, and kidney.

Its subcellular location is the endoplasmic reticulum membrane. The protein localises to the microsome membrane. It carries out the reaction an organic molecule + reduced [NADPH--hemoprotein reductase] + O2 = an alcohol + oxidized [NADPH--hemoprotein reductase] + H2O + H(+). Its function is as follows. Cytochromes P450 are a group of heme-thiolate monooxygenases. In liver microsomes, this enzyme is involved in an NADPH-dependent electron transport pathway. It oxidizes a variety of structurally unrelated compounds, including steroids, fatty acids, and xenobiotics. This Oryctolagus cuniculus (Rabbit) protein is Cytochrome P450 2C16 (CYP2C16).